A 576-amino-acid chain; its full sequence is Arginine--tRNA ligase (576 aa).

Residues 126 to 136 carry the 'HIGH' region motif; that stretch reads ANPTGPMHIGH.

Belongs to the class-I aminoacyl-tRNA synthetase family. As to quaternary structure, monomer.

The protein localises to the cytoplasm. The catalysed reaction is tRNA(Arg) + L-arginine + ATP = L-arginyl-tRNA(Arg) + AMP + diphosphate. This is Arginine--tRNA ligase from Rickettsia typhi (strain ATCC VR-144 / Wilmington).